A 220-amino-acid polypeptide reads, in one-letter code: MKITAVLFDLDGTIIDTNQLIIKSFVYTVEKHLGYKIGAEEVIPYFGEPLPLTLQRFSKDKWEIMLKTYRDYNEKYHDRYTKIREDVKEVLARLKEEGIKTAVVTSKRRELAKRGLKLFELDKYFDVLVGLEDTEKHKPEPDPVLKALELLKSPREEALMVGDSPYDILSARSAGVRSVAVKWSVLPFELLKKEKPDYFIEDMWQLLKIIKGCDEDEHEQ.

Asp9 functions as the Nucleophile in the catalytic mechanism.

This sequence belongs to the HAD-like hydrolase superfamily. PpaX family. Mg(2+) is required as a cofactor.

It catalyses the reaction diphosphate + H2O = 2 phosphate + H(+). The sequence is that of Putative pyrophosphatase PpaX from Caldanaerobacter subterraneus subsp. tengcongensis (strain DSM 15242 / JCM 11007 / NBRC 100824 / MB4) (Thermoanaerobacter tengcongensis).